A 152-amino-acid polypeptide reads, in one-letter code: Large ribosomal subunit protein uL15 (152 aa).

A compositionally biased stretch (polar residues) spans 1–12 (MTSTLNTLKSNT). Residues 1–57 (MTSTLNTLKSNTGSRKKKLRKGRGIAAGQGASCGFGMRGQKSRSGRPTRPGFEGGQM) form a disordered region. Residues 14 to 23 (SRKKKLRKGR) are compositionally biased toward basic residues. A compositionally biased stretch (gly residues) spans 25-37 (IAAGQGASCGFGM).

The protein belongs to the universal ribosomal protein uL15 family. In terms of assembly, part of the 50S ribosomal subunit.

Binds to the 23S rRNA. The sequence is that of Large ribosomal subunit protein uL15 from Prochlorococcus marinus subsp. pastoris (strain CCMP1986 / NIES-2087 / MED4).